Reading from the N-terminus, the 119-residue chain is Holo-[acyl-carrier-protein] synthase (119 aa).

Mg(2+)-binding residues include aspartate 8 and glutamate 53.

This sequence belongs to the P-Pant transferase superfamily. AcpS family. Requires Mg(2+) as cofactor.

The protein localises to the cytoplasm. It catalyses the reaction apo-[ACP] + CoA = holo-[ACP] + adenosine 3',5'-bisphosphate + H(+). In terms of biological role, transfers the 4'-phosphopantetheine moiety from coenzyme A to a Ser of acyl-carrier-protein. The protein is Holo-[acyl-carrier-protein] synthase of Petrotoga mobilis (strain DSM 10674 / SJ95).